The following is a 451-amino-acid chain: DNA-directed RNA polymerase subunit Rpo1C (451 aa).

The unknown stretch occupies residues 1 to 68 (MQDIIGKIED…DDDELLDAVE (68 aa)). Residues 69–451 (DDYQRILKVQ…SVSVVMKERK (383 aa)) form a DNA-directed RNA polymerase subunit Rpo1C region.

The protein belongs to the RNA polymerase beta' chain family. In terms of assembly, part of the RNA polymerase complex.

The protein resides in the cytoplasm. The catalysed reaction is RNA(n) + a ribonucleoside 5'-triphosphate = RNA(n+1) + diphosphate. Its function is as follows. DNA-dependent RNA polymerase (RNAP) catalyzes the transcription of DNA into RNA using the four ribonucleoside triphosphates as substrates. Forms part of the jaw domain. The polypeptide is DNA-directed RNA polymerase subunit Rpo1C (Methanothermobacter thermautotrophicus (strain ATCC 29096 / DSM 1053 / JCM 10044 / NBRC 100330 / Delta H) (Methanobacterium thermoautotrophicum)).